We begin with the raw amino-acid sequence, 387 residues long: uncharacterized protein (387 aa).

A signal peptide spans 1-27 (MKKWMITIAMLILAGIALFVFISPLKS).

This is an uncharacterized protein from Bacillus subtilis (strain 168).